We begin with the raw amino-acid sequence, 1083 residues long: Rho GTPase-activating protein 39 (1083 aa).

An N-acetylserine modification is found at S2. 2 WW domains span residues N25–G58 and R63–G97. Positions K110–A154 are disordered. The span at R117 to E141 shows a compositional bias: low complexity. S169 bears the Phosphoserine mark. The interval A226–Q369 is disordered. Positions P245–T256 are enriched in polar residues. Positions P268–E280 are enriched in basic and acidic residues. Residues S286, S384, S388, S406, and S407 each carry the phosphoserine modification. Disordered stretches follow at residues G405 to G545 and M570 to V599. Composition is skewed to polar residues over residues S474–S488 and R573–G582. 4 positions are modified to phosphoserine: S604, S690, S715, and S726. Residues W722–K879 enclose the MyTH4 domain. The 189-residue stretch at S890–F1078 folds into the Rho-GAP domain.

It localises to the nucleus. This is Rho GTPase-activating protein 39 (ARHGAP39) from Homo sapiens (Human).